A 274-amino-acid chain; its full sequence is Transmembrane protein 106B (274 aa).

The segment covering 1–11 (MGKSLSHLPLH) has biased composition (low complexity). The disordered stretch occupies residues 1–20 (MGKSLSHLPLHSSKEDAYDG). Glycine 2 is lipidated: N-myristoyl glycine. The Cytoplasmic segment spans residues 2–96 (GKSLSHLPLH…QRLRPRRTKL (95 aa)). At serine 33 the chain carries Phosphoserine. The helical transmembrane segment at 97-117 (YVMASVFVCLLLSGLAVFFLF) threads the bilayer. The Lumenal segment spans residues 118–274 (PRSIDVKYIG…EYLNVLQPQQ (157 aa)). Asparagine 145, asparagine 151, asparagine 164, and asparagine 183 each carry an N-linked (GlcNAc...) asparagine glycan. Cysteine 214 and cysteine 253 are disulfide-bonded. An N-linked (GlcNAc...) asparagine glycan is attached at asparagine 256.

The protein belongs to the TMEM106 family. In terms of assembly, can form homomers. Interacts (via N-terminus) with MAP6 (via C-terminus). Interacts (via C-terminus) with the vacuolar-type ATPase subunit ATP6AP1. Interacts (via N-terminus) with AP2M1 and CLTC. Interacts with TMEM106C. As to quaternary structure, (Microbial infection) Interacts with SARS coronavirus-2/SARS-CoV-2 spike protein (via RBD domain). Expressed in the brain, including in the frontal cortex (at protein level). Expressed in lung epithelial cells.

It is found in the late endosome membrane. The protein resides in the lysosome membrane. The protein localises to the cell membrane. In terms of biological role, in neurons, involved in the transport of late endosomes/lysosomes. May be involved in dendrite morphogenesis and maintenance by regulating lysosomal trafficking. May act as a molecular brake for retrograde transport of late endosomes/lysosomes, possibly via its interaction with MAP6. In motoneurons, may mediate the axonal transport of lysosomes and axonal sorting at the initial segment. It remains unclear whether TMEM106B affects the transport of moving lysosomes in the anterograde or retrograde direction in neurites and whether it is important in the sorting of lysosomes in axons or in dendrites. In neurons, may also play a role in the regulation of lysosomal size and responsiveness to stress. Required for proper lysosomal acidification. (Microbial infection) Plays a role in human coronavirus SARS-CoV-2 infection, but not in common cold coronaviruses HCoV-229E and HCoV-OC43 infections. Involved in ACE2-independent SARS-CoV-2 cell entry. Required for post-endocytic stage of virus entry, facilitates spike-mediated membrane fusion. Virus attachment and endocytosis can also be mediated by other cell surface receptors. This chain is Transmembrane protein 106B, found in Homo sapiens (Human).